Reading from the N-terminus, the 207-residue chain is Guanylate kinase (207 aa).

Positions 4 to 184 (GTLYIVSAPS…ALSDLKTIIR (181 aa)) constitute a Guanylate kinase-like domain. 11–18 (APSGAGKS) provides a ligand contact to ATP.

It belongs to the guanylate kinase family.

It localises to the cytoplasm. It carries out the reaction GMP + ATP = GDP + ADP. Functionally, essential for recycling GMP and indirectly, cGMP. In Salmonella paratyphi A (strain ATCC 9150 / SARB42), this protein is Guanylate kinase.